We begin with the raw amino-acid sequence, 438 residues long: MRFKFPLMAISLEVAMIVLFGLFVEYETPQNASQKNASHQNASQQGNTSSSAKKDQFFQLYPLFQDVHVMIFVGFGFLMTFLKKYGFSGVGFNLFLAALGLQWGTIMQGLLHSHGKEFHFGIYNMINADFSTATVLISFGAVLGKTSPIQMLIMTILEIAVFAGNEYLVTELFEASDTGASMTIHAFGAYFGLAVAGVLYRPGLRCEHPNDESVYHSDLFAMIGTLFLWIFWPSFNSAIADPGDHQYRAIVNTYMSLAACVITAYALSSLVERRGRLDMVHIQNATLAGGVAVGTCADMEIPLYAAMTIGSIAGIISVLGYKFFSPLLANKLMIHDTCGVHNLHGLPGVFGGLASIVAISWGMSTASMAMQAAALGSSIGSAIVGGLLTGLILKLPIWNQPPDEYCYDDSVSWKVPKFRELDNRFFQHANHNHVEHEV.

Over 1–4 (MRFK) the chain is Cytoplasmic. Residues 5–25 (FPLMAISLEVAMIVLFGLFVE) traverse the membrane as a helical segment. The Extracellular segment spans residues 26-61 (YETPQNASQKNASHQNASQQGNTSSSAKKDQFFQLY). 4 N-linked (GlcNAc...) asparagine glycosylation sites follow: N31, N36, N41, and N47. A helical membrane pass occupies residues 62 to 82 (PLFQDVHVMIFVGFGFLMTFL). Residues 83 to 86 (KKYG) are Cytoplasmic-facing. A helical transmembrane segment spans residues 87–107 (FSGVGFNLFLAALGLQWGTIM). The Extracellular segment spans residues 108–121 (QGLLHSHGKEFHFG). The chain crosses the membrane as a helical span at residues 122-142 (IYNMINADFSTATVLISFGAV). Residues 143–148 (LGKTSP) are Cytoplasmic-facing. Residues 149–169 (IQMLIMTILEIAVFAGNEYLV) traverse the membrane as a helical segment. The Extracellular segment spans residues 170 to 178 (TELFEASDT). Residues 179–199 (GASMTIHAFGAYFGLAVAGVL) form a helical membrane-spanning segment. The Cytoplasmic portion of the chain corresponds to 200 to 218 (YRPGLRCEHPNDESVYHSD). Residues 219–239 (LFAMIGTLFLWIFWPSFNSAI) form a helical membrane-spanning segment. Residues 240–249 (ADPGDHQYRA) lie on the Extracellular side of the membrane. The helical transmembrane segment at 250 to 270 (IVNTYMSLAACVITAYALSSL) threads the bilayer. The Cytoplasmic segment spans residues 271-278 (VERRGRLD). Residues 279–296 (MVHIQNATLAGGVAVGTC) traverse the membrane as a helical segment. The Extracellular segment spans residues 297–300 (ADME). Residues 301-321 (IPLYAAMTIGSIAGIISVLGY) traverse the membrane as a helical segment. Topologically, residues 322–342 (KFFSPLLANKLMIHDTCGVHN) are cytoplasmic. A helical transmembrane segment spans residues 343–363 (LHGLPGVFGGLASIVAISWGM). Residues 364-372 (STASMAMQA) are Extracellular-facing. A helical membrane pass occupies residues 373-393 (AALGSSIGSAIVGGLLTGLIL). Over 394–438 (KLPIWNQPPDEYCYDDSVSWKVPKFRELDNRFFQHANHNHVEHEV) the chain is Cytoplasmic.

It belongs to the ammonium transporter (TC 2.A.49) family. Rh subfamily. As to quaternary structure, homodimer. Heterotrimer; a RHCE monomer interacts with a RHAG homodimer. Component of the ankyrin-1 complex in the erythrocyte, composed of ANK1, RHCE, RHAG, SLC4A1, EPB42, GYPA, GYPB and AQP1. Interacts with GYPB (via the N-terminal); this interaction bridges the (RHAG)2(RHCE) heterotrimer with the SLC4A1 Band 3 I dimer complexed with GYPA. Post-translationally, glycosylated.

The protein resides in the membrane. The catalysed reaction is methylamine(out) = methylamine(in). The enzyme catalyses NH4(+)(in) = NH4(+)(out). It catalyses the reaction CO2(out) = CO2(in). In terms of biological role, component of the ankyrin-1 complex, a multiprotein complex involved in the stability and shape of the erythrocyte membrane. Heterotrimer with RHCE (RHAG)2(RHCE), that transports ammonium and its related derivative methylammonium, in both neutral and ionic forms, across the erythrocyte membrane. The transport of NH4(+) is electrogenic and masks the NH3 transport. Also, may act as a CO2 channel. Moreover in erythrocyte, regulates RHD membrane expression and is associated with rhesus blood group antigen expression. This is Ammonium transporter Rh type A from Mus musculus (Mouse).